The primary structure comprises 68 residues: ATP synthase F(0) complex subunit 8 (68 aa).

The helical transmembrane segment at 8 to 24 (TWFTTILSMFLTLFIIF) threads the bilayer. Lysine 54 bears the N6-acetyllysine; alternate mark. Lysine 54 carries the post-translational modification N6-succinyllysine; alternate. Position 57 is an N6-acetyllysine (lysine 57).

It belongs to the ATPase protein 8 family. As to quaternary structure, component of the ATP synthase complex composed at least of ATP5F1A/subunit alpha, ATP5F1B/subunit beta, ATP5MC1/subunit c (homooctomer), MT-ATP6/subunit a, MT-ATP8/subunit 8, ATP5ME/subunit e, ATP5MF/subunit f, ATP5MG/subunit g, ATP5MK/subunit k, ATP5MJ/subunit j, ATP5F1C/subunit gamma, ATP5F1D/subunit delta, ATP5F1E/subunit epsilon, ATP5PF/subunit F6, ATP5PB/subunit b, ATP5PD/subunit d, ATP5PO/subunit OSCP. ATP synthase complex consists of a soluble F(1) head domain (subunits alpha(3) and beta(3)) - the catalytic core - and a membrane F(0) domain - the membrane proton channel (subunits c, a, 8, e, f, g, k and j). These two domains are linked by a central stalk (subunits gamma, delta, and epsilon) rotating inside the F1 region and a stationary peripheral stalk (subunits F6, b, d, and OSCP). Interacts with PRICKLE3.

Its subcellular location is the mitochondrion membrane. Subunit 8, of the mitochondrial membrane ATP synthase complex (F(1)F(0) ATP synthase or Complex V) that produces ATP from ADP in the presence of a proton gradient across the membrane which is generated by electron transport complexes of the respiratory chain. ATP synthase complex consist of a soluble F(1) head domain - the catalytic core - and a membrane F(1) domain - the membrane proton channel. These two domains are linked by a central stalk rotating inside the F(1) region and a stationary peripheral stalk. During catalysis, ATP synthesis in the catalytic domain of F(1) is coupled via a rotary mechanism of the central stalk subunits to proton translocation. In vivo, can only synthesize ATP although its ATP hydrolase activity can be activated artificially in vitro. Part of the complex F(0) domain. This is ATP synthase F(0) complex subunit 8 from Hippopotamus amphibius (Hippopotamus).